The primary structure comprises 156 residues: Urease accessory protein UreE (156 aa).

The disordered stretch occupies residues 133-156; the sequence is RPESGAYGSGRTMGHDHGPFHVHA. Basic and acidic residues predominate over residues 145–156; the sequence is MGHDHGPFHVHA.

The protein belongs to the UreE family.

The protein resides in the cytoplasm. Involved in urease metallocenter assembly. Binds nickel. Probably functions as a nickel donor during metallocenter assembly. In Rhodobacter capsulatus (Rhodopseudomonas capsulata), this protein is Urease accessory protein UreE.